The sequence spans 48 residues: uncharacterized protein (48 aa).

This is an uncharacterized protein from Acidianus convivator (ATV).